Consider the following 198-residue polypeptide: NAD(P)H dehydrogenase (quinone) (198 aa).

In terms of domain architecture, Flavodoxin-like spans 4–190 (VLVLYYSAYG…EGAKYQGAHV (187 aa)). Residues 10 to 15 (SAYGHI) and 78 to 80 (TRF) contribute to the FMN site. Tyr-12 serves as a coordination point for NAD(+). Trp-98 contacts substrate. FMN is bound by residues 113 to 119 (SSATQHG) and His-134.

The protein belongs to the WrbA family. FMN serves as cofactor.

It catalyses the reaction a quinone + NADH + H(+) = a quinol + NAD(+). The catalysed reaction is a quinone + NADPH + H(+) = a quinol + NADP(+). In Rhizobium johnstonii (strain DSM 114642 / LMG 32736 / 3841) (Rhizobium leguminosarum bv. viciae), this protein is NAD(P)H dehydrogenase (quinone).